A 193-amino-acid polypeptide reads, in one-letter code: Ribonuclease HII (193 aa).

The 179-residue stretch at 15-193 (YIVAGIDEAG…PYHRKSFKCC (179 aa)) folds into the RNase H type-2 domain. Residues aspartate 21, glutamate 22, and aspartate 112 each coordinate a divalent metal cation.

Belongs to the RNase HII family. Mn(2+) is required as a cofactor. Requires Mg(2+) as cofactor.

It localises to the cytoplasm. It catalyses the reaction Endonucleolytic cleavage to 5'-phosphomonoester.. Endonuclease that specifically degrades the RNA of RNA-DNA hybrids. This chain is Ribonuclease HII, found in Rickettsia akari (strain Hartford).